The following is a 58-amino-acid chain: ATP synthase subunit a (58 aa).

The next 2 membrane-spanning stretches (helical) occupy residues 11–31 and 35–55; these read EIFY…LTGL and VAIL…NDAI.

It belongs to the ATPase A chain family. In terms of assembly, F-type ATPases have 2 components, CF(1) - the catalytic core - and CF(0) - the membrane proton channel. CF(1) has five subunits: alpha(3), beta(3), gamma(1), delta(1), epsilon(1). CF(0) has three main subunits: a, b and c.

The protein resides in the mitochondrion inner membrane. Its function is as follows. Mitochondrial membrane ATP synthase (F(1)F(0) ATP synthase or Complex V) produces ATP from ADP in the presence of a proton gradient across the membrane which is generated by electron transport complexes of the respiratory chain. F-type ATPases consist of two structural domains, F(1) - containing the extramembraneous catalytic core and F(0) - containing the membrane proton channel, linked together by a central stalk and a peripheral stalk. During catalysis, ATP synthesis in the catalytic domain of F(1) is coupled via a rotary mechanism of the central stalk subunits to proton translocation. Key component of the proton channel; it may play a direct role in the translocation of protons across the membrane. This is ATP synthase subunit a (ATP6) from Brassica tournefortii (Wild turnip).